The sequence spans 486 residues: Glutamyl-tRNA(Gln) amidotransferase subunit A (486 aa).

Residues K77 and S152 each act as charge relay system in the active site. S176 acts as the Acyl-ester intermediate in catalysis.

Belongs to the amidase family. GatA subfamily. In terms of assembly, heterotrimer of A, B and C subunits.

The enzyme catalyses L-glutamyl-tRNA(Gln) + L-glutamine + ATP + H2O = L-glutaminyl-tRNA(Gln) + L-glutamate + ADP + phosphate + H(+). Its function is as follows. Allows the formation of correctly charged Gln-tRNA(Gln) through the transamidation of misacylated Glu-tRNA(Gln) in organisms which lack glutaminyl-tRNA synthetase. The reaction takes place in the presence of glutamine and ATP through an activated gamma-phospho-Glu-tRNA(Gln). In Lactococcus lactis subsp. cremoris (strain SK11), this protein is Glutamyl-tRNA(Gln) amidotransferase subunit A.